The primary structure comprises 353 residues: Transcription termination/antitermination protein NusG (353 aa).

The region spanning 301–335 (VGDMVKIISGPFEDFAGVIKEIDPERQELKVNVTI) is the KOW domain.

The protein belongs to the NusG family.

With respect to regulation, regulated by autoinhibition via interaction of the N-terminal and the C-terminal domains. Autoinhibition may prevent NusG from interacting prematurely with other components of the transcription complex or non-specific interactions with other cellular components. Participates in transcription elongation, termination and antitermination. This is Transcription termination/antitermination protein NusG from Thermotoga maritima (strain ATCC 43589 / DSM 3109 / JCM 10099 / NBRC 100826 / MSB8).